We begin with the raw amino-acid sequence, 887 residues long: Alanine--tRNA ligase (887 aa).

4 residues coordinate Zn(2+): His-581, His-585, Cys-683, and His-687.

The protein belongs to the class-II aminoacyl-tRNA synthetase family. It depends on Zn(2+) as a cofactor.

It localises to the cytoplasm. The enzyme catalyses tRNA(Ala) + L-alanine + ATP = L-alanyl-tRNA(Ala) + AMP + diphosphate. In terms of biological role, catalyzes the attachment of alanine to tRNA(Ala) in a two-step reaction: alanine is first activated by ATP to form Ala-AMP and then transferred to the acceptor end of tRNA(Ala). Also edits incorrectly charged Ser-tRNA(Ala) and Gly-tRNA(Ala) via its editing domain. This Ehrlichia ruminantium (strain Gardel) protein is Alanine--tRNA ligase.